The primary structure comprises 222 residues: Latexin (222 aa).

In terms of domain architecture, Cystatin LXN-type 1 spans 1–97 (MEIPPTHYAA…NFTFEGEIGK (97 aa)). Residue Lys55 is modified to N6-acetyllysine. The tract at residues 98–117 (NPDEEDNTFYQSLMSLKRPL) is alpha-helical linker. Residues 118-222 (EAQDIPDNFG…SRLPKEGQAE (105 aa)) enclose the Cystatin LXN-type 2 domain.

This sequence belongs to the protease inhibitor I47 (latexin) family. As to expression, highly enriched in macrophages.

The protein resides in the cytoplasm. In terms of biological role, hardly reversible, non-competitive, and potent inhibitor of CPA1, CPA2 and CPA4. May play a role in inflammation. In Mus musculus (Mouse), this protein is Latexin (Lxn).